The sequence spans 192 residues: Large ribosomal subunit protein uL18 (192 aa).

It belongs to the universal ribosomal protein uL18 family. Part of the 50S ribosomal subunit. Contacts the 5S and 23S rRNAs.

Functionally, this is one of the proteins that bind and probably mediate the attachment of the 5S RNA into the large ribosomal subunit, where it forms part of the central protuberance. The sequence is that of Large ribosomal subunit protein uL18 from Methanothermobacter thermautotrophicus (strain ATCC 29096 / DSM 1053 / JCM 10044 / NBRC 100330 / Delta H) (Methanobacterium thermoautotrophicum).